The sequence spans 260 residues: Activator of 90 kDa heat shock protein ATPase homolog 2 (260 aa).

Belongs to the AHA1 family.

Its function is as follows. Co-chaperone that stimulates HSP90 ATPase activity. The chain is Activator of 90 kDa heat shock protein ATPase homolog 2 (AHSA2) from Bos taurus (Bovine).